We begin with the raw amino-acid sequence, 142 residues long: Non-specific lipid transfer protein GPI-anchored 34 (142 aa).

The first 22 residues, 1–22, serve as a signal peptide directing secretion; that stretch reads MAVAVTAVLFLAVVIAPQWTET. The interval 21–43 is disordered; it reads ETKKPPRPSDTSDTSGTSGRDRR. Residues 29–38 show a composition bias toward low complexity; that stretch reads SDTSDTSGTS. Cystine bridges form between Cys-46-Cys-85, Cys-57-Cys-69, Cys-70-Cys-106, and Cys-83-Cys-114. Residue Asn-120 is the site of GPI-anchor amidated asparagine attachment. Positions 121–142 are cleaved as a propeptide — removed in mature form; that stretch reads GGATKKIVASMGLFGVVASLFF.

This sequence belongs to the plant LTP family.

The protein resides in the cell membrane. Functionally, probable lipid transfer protein. This is Non-specific lipid transfer protein GPI-anchored 34 from Arabidopsis thaliana (Mouse-ear cress).